Reading from the N-terminus, the 290-residue chain is Small ribosomal subunit biogenesis GTPase RsgA (290 aa).

The 152-residue stretch at 62 to 213 (KNSLVRPPIV…IADTPGFSSL (152 aa)) folds into the CP-type G domain. GTP is bound by residues 111-114 (SKMD) and 156-164 (GQTGVGKST). Zn(2+) contacts are provided by Cys237, Cys242, His244, and Cys250.

This sequence belongs to the TRAFAC class YlqF/YawG GTPase family. RsgA subfamily. Monomer. Associates with 30S ribosomal subunit, binds 16S rRNA. Zn(2+) serves as cofactor.

The protein resides in the cytoplasm. One of several proteins that assist in the late maturation steps of the functional core of the 30S ribosomal subunit. Helps release RbfA from mature subunits. May play a role in the assembly of ribosomal proteins into the subunit. Circularly permuted GTPase that catalyzes slow GTP hydrolysis, GTPase activity is stimulated by the 30S ribosomal subunit. The polypeptide is Small ribosomal subunit biogenesis GTPase RsgA (Streptococcus pyogenes serotype M6 (strain ATCC BAA-946 / MGAS10394)).